Consider the following 262-residue polypeptide: MEIIPPRLKEPLYRLYELRLRQGLAASKSDLPRHIAVLCDGNRRWARSAGYDDVSYGYRMGAAKIAEMLRWCHEAGIELATVYLLSTENLQRDPDELAALIEIITDVVEEICAPANHWSVRTVGDLGLIGEEPARRLRGAVESTPEVASFHVNVAVGYGGRREIVDAVRALLSKELANGATAEELVDAVTVEGISENLYTSGQPDPDLVIRTSGEQRLSGFLLWQSAYSEMWFTEAHWPAFRHVDFLRALRDYSARHRRYGR.

The active site involves Asp-40. Asp-40 is a Mg(2+) binding site. Substrate contacts are provided by residues 41-44 (GNRR), Trp-45, and 86-88 (STE). Residue Asn-89 is the Proton acceptor of the active site. Substrate-binding positions include Arg-92, Arg-211, and 217–219 (RLS). Position 230 (Glu-230) interacts with Mg(2+).

It belongs to the UPP synthase family. Z-FPP synthase subfamily. Requires Mg(2+) as cofactor.

It catalyses the reaction isopentenyl diphosphate + (2E)-geranyl diphosphate = (2Z,6E)-farnesyl diphosphate + diphosphate. Its pathway is phospholipid metabolism; decaprenyl phosphate biosynthesis. Its function is as follows. Generates Z-farnesyl diphosphate (Z-FPP) from isopentenyl pyrophosphate (IPP). Z-FPP is the precursor of decaprenyl diphosphate, which has a central role in the biosynthesis of the mycobacterial cell wall. In Mycobacterium bovis (strain ATCC BAA-935 / AF2122/97), this protein is Short-chain Z-isoprenyl diphosphate synthase.